A 159-amino-acid chain; its full sequence is Ribosomal RNA large subunit methyltransferase H (159 aa).

S-adenosyl-L-methionine-binding positions include Leu-76, Gly-108, and 127 to 132 (FGLLTL).

The protein belongs to the RNA methyltransferase RlmH family. Homodimer.

Its subcellular location is the cytoplasm. It carries out the reaction pseudouridine(1915) in 23S rRNA + S-adenosyl-L-methionine = N(3)-methylpseudouridine(1915) in 23S rRNA + S-adenosyl-L-homocysteine + H(+). Specifically methylates the pseudouridine at position 1915 (m3Psi1915) in 23S rRNA. The sequence is that of Ribosomal RNA large subunit methyltransferase H from Leuconostoc mesenteroides subsp. mesenteroides (strain ATCC 8293 / DSM 20343 / BCRC 11652 / CCM 1803 / JCM 6124 / NCDO 523 / NBRC 100496 / NCIMB 8023 / NCTC 12954 / NRRL B-1118 / 37Y).